A 299-amino-acid chain; its full sequence is ATP phosphoribosyltransferase (299 aa).

It belongs to the ATP phosphoribosyltransferase family. Long subfamily. It depends on Mg(2+) as a cofactor.

Its subcellular location is the cytoplasm. It catalyses the reaction 1-(5-phospho-beta-D-ribosyl)-ATP + diphosphate = 5-phospho-alpha-D-ribose 1-diphosphate + ATP. The protein operates within amino-acid biosynthesis; L-histidine biosynthesis; L-histidine from 5-phospho-alpha-D-ribose 1-diphosphate: step 1/9. With respect to regulation, feedback inhibited by histidine. In terms of biological role, catalyzes the condensation of ATP and 5-phosphoribose 1-diphosphate to form N'-(5'-phosphoribosyl)-ATP (PR-ATP). Has a crucial role in the pathway because the rate of histidine biosynthesis seems to be controlled primarily by regulation of HisG enzymatic activity. The sequence is that of ATP phosphoribosyltransferase from Shewanella oneidensis (strain ATCC 700550 / JCM 31522 / CIP 106686 / LMG 19005 / NCIMB 14063 / MR-1).